Consider the following 497-residue polypeptide: Glutamyl-tRNA(Gln) amidotransferase subunit A (497 aa).

Residues Lys-75 and Ser-150 each act as charge relay system in the active site. Ser-174 acts as the Acyl-ester intermediate in catalysis.

It belongs to the amidase family. GatA subfamily. In terms of assembly, heterotrimer of A, B and C subunits.

The enzyme catalyses L-glutamyl-tRNA(Gln) + L-glutamine + ATP + H2O = L-glutaminyl-tRNA(Gln) + L-glutamate + ADP + phosphate + H(+). Its function is as follows. Allows the formation of correctly charged Gln-tRNA(Gln) through the transamidation of misacylated Glu-tRNA(Gln) in organisms which lack glutaminyl-tRNA synthetase. The reaction takes place in the presence of glutamine and ATP through an activated gamma-phospho-Glu-tRNA(Gln). This chain is Glutamyl-tRNA(Gln) amidotransferase subunit A, found in Paraburkholderia phymatum (strain DSM 17167 / CIP 108236 / LMG 21445 / STM815) (Burkholderia phymatum).